Reading from the N-terminus, the 123-residue chain is Hydrogenase maturation factor HypA (123 aa).

Residue His-2 participates in Ni(2+) binding. Residues Cys-77, Cys-80, Cys-96, and Cys-99 each coordinate Zn(2+).

It belongs to the HypA/HybF family.

In terms of biological role, involved in the maturation of [NiFe] hydrogenases. Required for nickel insertion into the metal center of the hydrogenase. The sequence is that of Hydrogenase maturation factor HypA from Methanococcus aeolicus (strain ATCC BAA-1280 / DSM 17508 / OCM 812 / Nankai-3).